A 267-amino-acid chain; its full sequence is NAD-capped RNA hydrolase NudC (267 aa).

Residue Arg70 participates in substrate binding. Zn(2+) is bound by residues Cys99 and Cys102. Substrate is bound at residue Glu112. Residues Cys117 and Cys122 each contribute to the Zn(2+) site. Residue Tyr127 participates in substrate binding. The 130-residue stretch at 128-257 folds into the Nudix hydrolase domain; it reads PVICPSIIVA…TIARALIEAT (130 aa). The a divalent metal cation site is built by Ala166, Glu182, and Glu186. Residues 167-188 carry the Nudix box motif; that stretch reads GFVEVGESFEQTIHREVFEETG. A substrate-binding site is contributed by 200 to 207; the sequence is QPWAFPNS. An a divalent metal cation-binding site is contributed by Glu227. Ala250 serves as a coordination point for substrate.

This sequence belongs to the Nudix hydrolase family. NudC subfamily. As to quaternary structure, homodimer. Requires Mg(2+) as cofactor. Mn(2+) is required as a cofactor. Zn(2+) serves as cofactor.

It catalyses the reaction a 5'-end NAD(+)-phospho-ribonucleoside in mRNA + H2O = a 5'-end phospho-adenosine-phospho-ribonucleoside in mRNA + beta-nicotinamide D-ribonucleotide + 2 H(+). The catalysed reaction is NAD(+) + H2O = beta-nicotinamide D-ribonucleotide + AMP + 2 H(+). It carries out the reaction NADH + H2O = reduced beta-nicotinamide D-ribonucleotide + AMP + 2 H(+). MRNA decapping enzyme that specifically removes the nicotinamide adenine dinucleotide (NAD) cap from a subset of mRNAs by hydrolyzing the diphosphate linkage to produce nicotinamide mononucleotide (NMN) and 5' monophosphate mRNA. The NAD-cap is present at the 5'-end of some mRNAs and stabilizes RNA against 5'-processing. Has preference for mRNAs with a 5'-end purine. Catalyzes the hydrolysis of a broad range of dinucleotide pyrophosphates. This Mannheimia succiniciproducens (strain KCTC 0769BP / MBEL55E) protein is NAD-capped RNA hydrolase NudC.